The sequence spans 518 residues: Glutamate--cysteine ligase (518 aa).

The protein belongs to the glutamate--cysteine ligase type 1 family. Type 1 subfamily.

The enzyme catalyses L-cysteine + L-glutamate + ATP = gamma-L-glutamyl-L-cysteine + ADP + phosphate + H(+). It functions in the pathway sulfur metabolism; glutathione biosynthesis; glutathione from L-cysteine and L-glutamate: step 1/2. This Shigella flexneri serotype 5b (strain 8401) protein is Glutamate--cysteine ligase.